Consider the following 206-residue polypeptide: Transmembrane emp24 domain-containing protein bai (206 aa).

Residues 1-20 (MLKVLYVIFTIFGYIWPIYS) form the signal peptide. Over 21–172 (VMFHLTPNTQ…RDTNEKTNSR (152 aa)) the chain is Lumenal. Positions 30 to 140 (QKCLKEDIQA…LKPLEVDLKR (111 aa)) constitute a GOLD domain. Residues 173-193 (VLFFSIFSMCCLLGLATWQVL) traverse the membrane as a helical segment. The Cytoplasmic portion of the chain corresponds to 194 to 206 (YLRRYFKAKKLIE).

Belongs to the EMP24/GP25L family.

Its subcellular location is the membrane. In terms of biological role, eca and bai are essential, though not redundant, for dorsoventral patterning of the embryo. Specifically required during early embryogenesis for the activity of maternal tkv, while the zygotic tkv is not affected. This is Transmembrane emp24 domain-containing protein bai from Drosophila virilis (Fruit fly).